We begin with the raw amino-acid sequence, 2968 residues long: Polyketide synthase 37 (2968 aa).

Positions 32-454 (KEPIAIIGIG…GSNSSLFLSS (423 aa)) constitute a Ketosynthase family 3 (KS3) domain. Catalysis depends on for beta-ketoacyl synthase activity residues C198, H338, and H378. A malonyl-CoA:ACP transacylase (MAT) domain region spans residues 624–950 (FIFSGQGQQW…LSTLSKNSNS (327 aa)). The active-site For malonyltransferase activity is the S718. Residues 1017 to 1157 (PPMFISLDRK…GIIKYGTNYL (141 aa)) form an N-terminal hotdog fold region. Residues 1017–1350 (PPMFISLDRK…FKGINSSSSS (334 aa)) enclose the PKS/mFAS DH domain. A dehydratase (DH) domain region spans residues 1031 to 1345 (TPSFEVRLNQ…LTNLEFKGIN (315 aa)). H1049 acts as the Proton acceptor; for dehydratase activity in catalysis. The segment at 1183-1350 (FKSFNSNEFY…FKGINSSSSS (168 aa)) is C-terminal hotdog fold. D1257 (proton donor; for dehydratase activity) is an active-site residue. A disordered region spans residues 1522 to 1547 (SCGGGGGSTNNTISNSSSSISSIDNG). Over residues 1530–1547 (TNNTISNSSSSISSIDNG) the composition is skewed to low complexity. Residues 1718 to 2053 (GIISDLKIKQ…SGNHIGKILI (336 aa)) are enoyl reductase (ER) domain. A ketoreductase (KR) domain region spans residues 2083 to 2277 (TYIFTGFGGL…LKSSCIHLAS (195 aa)). The disordered stretch occupies residues 2379 to 2400 (GDGSFDDLNQLEDEGQQGFGNG). Positions 2421 to 2498 (FDNDFYTKSI…STVELIKNKL (78 aa)) constitute a Carrier domain. S2458 is subject to O-(pantetheine 4'-phosphoryl)serine. The disordered stretch occupies residues 2568-2589 (SSSSNNSNSKNELTSPPPSAKR). The chalcone synthase stretch occupies residues 2707–2968 (ISHVVGVTST…IEAILFKLIK (262 aa)). C2747 is an active-site residue.

The cofactor is pantetheine 4'-phosphate.

It carries out the reaction (E)-4-coumaroyl-CoA + 3 malonyl-CoA + 3 H(+) = 2',4,4',6'-tetrahydroxychalcone + 3 CO2 + 4 CoA. The enzyme catalyses hexanoyl-CoA + 3 malonyl-CoA + 3 H(+) = 2,4,6-trihydroxyphenylhexan-1-one + 3 CO2 + 4 CoA. It functions in the pathway secondary metabolite biosynthesis; flavonoid biosynthesis. In terms of biological role, polyketide synthase; part of the gene cluster that mediates the biosynthesis of DIF-1 (Differentiation Inducing Factor-1), a signal molecule involved in the differentiation of pstO (prestalk-O) cells. The three-step process begins with the formation of (2,4,6-trihydroxyphenyl)-1-hexan-1-one (THPH) by the polyketide synthase StlB. THPH is then dichlorinated by the flavin-dependent halogenase ChlA. The last step of DIF-1 biosynthesis is the O-methylation of dichloro-THPH (or des-methyl-DIF-1) by the methyltransferase DmtA to yield DIF-1. The polypeptide is Polyketide synthase 37 (StlB) (Dictyostelium discoideum (Social amoeba)).